Consider the following 860-residue polypeptide: Leucine--tRNA ligase (860 aa).

The short motif at 42–52 is the 'HIGH' region element; sequence PYPSGRLHMGH. Residues 619–623 carry the 'KMSKS' region motif; it reads KMSKS. K622 lines the ATP pocket.

The protein belongs to the class-I aminoacyl-tRNA synthetase family.

The protein localises to the cytoplasm. It catalyses the reaction tRNA(Leu) + L-leucine + ATP = L-leucyl-tRNA(Leu) + AMP + diphosphate. This chain is Leucine--tRNA ligase, found in Pectobacterium atrosepticum (strain SCRI 1043 / ATCC BAA-672) (Erwinia carotovora subsp. atroseptica).